The sequence spans 472 residues: 4-aminobutyrate aminotransferase (472 aa).

Residue 135 to 136 (GA) participates in pyridoxal 5'-phosphate binding. Arg-193 lines the substrate pocket. Position 327 is an N6-(pyridoxal phosphate)lysine (Lys-327). Thr-352 is a pyridoxal 5'-phosphate binding site.

This sequence belongs to the class-III pyridoxal-phosphate-dependent aminotransferase family. As to quaternary structure, homodimer and homotetramer. Requires pyridoxal 5'-phosphate as cofactor.

Its subcellular location is the cytoplasm. The catalysed reaction is 4-aminobutanoate + 2-oxoglutarate = succinate semialdehyde + L-glutamate. Its pathway is amino-acid degradation; L-arginine degradation. Required for the degradation of gamma-aminobutyric acid (GABA), which is important for utilization of GABA as nitrogen source and for oxidative stress tolerance. Deaminates GABA to succinate semialdehyde, which in turn is converted to succinate by the succinate-semialdehyde dehydrogenase UGA2. May be involved in an alternative, arginase-independent arginine degradation pathway via GABA. The sequence is that of 4-aminobutyrate aminotransferase from Kluyveromyces lactis (strain ATCC 8585 / CBS 2359 / DSM 70799 / NBRC 1267 / NRRL Y-1140 / WM37) (Yeast).